A 561-amino-acid polypeptide reads, in one-letter code: Lipase maturation factor 1 (561 aa).

Residues 1-32 (MAAPRESLRRRKAGAGDPEPEAPPGQGRDLKG) form a disordered region. Residues 1–42 (MAAPRESLRRRKAGAGDPEPEAPPGQGRDLKGRPARLRAGTF) are Cytoplasmic-facing. A helical membrane pass occupies residues 43-65 (WLTRIVLLRALAFVYFVAFLVAF). The Lumenal portion of the chain corresponds to 66-120 (HQNKQLIGDRGLLPCRAYLQSVQRHFGGRVSWDALSYAPTILWLLDWSHMDANLD). The chain crosses the membrane as a helical span at residues 121-144 (ALALLGLGISSFILVSGCANMVLM). Topologically, residues 145–200 (AALWVLYMSLVNVGQIWYSFGWESQLLETGFLGIFLCPLWTLSALPRGTPTSWVVM) are cytoplasmic. The helical transmembrane segment at 201 to 214 (WGFRWLIFRIMLGA) threads the bilayer. At 215–285 (GLIKIRGDRC…LGRRMCIVHG (71 aa)) the chain is on the lumenal side. The helical transmembrane segment at 286-314 (ALQVLFQVVLIISGNLSFLNWLTIVPSLA) threads the bilayer. Topologically, residues 315 to 360 (CFDDATLGGLFPSGPGRLKDQVLKIQEEETRGARAPRTRGSVARGT) are cytoplasmic. Residues 361–382 (VNLALGILVAWLSIPVVLNLLS) traverse the membrane as a helical segment. Residues 383 to 561 (PRQVMNSSFN…SRQWPYPEPE (179 aa)) lie on the Lumenal side of the membrane.

The protein belongs to the lipase maturation factor family. Interacts with LPL and SEL1L.

The protein resides in the endoplasmic reticulum membrane. Involved in the maturation of specific proteins in the endoplasmic reticulum. Required for maturation and transport of active lipoprotein lipase (LPL) through the secretory pathway. Each LMF1 molecule chaperones 50 or more molecules of LPL. In Bos taurus (Bovine), this protein is Lipase maturation factor 1 (LMF1).